Here is a 483-residue protein sequence, read N- to C-terminus: Probable cytochrome P450 517A1 (483 aa).

The helical transmembrane segment at 1-21 (MEIINVFLFLIILFLVKDFVK) threads the bilayer. Heme is bound at residue Cys-429.

Belongs to the cytochrome P450 family. The cofactor is heme.

The protein resides in the membrane. The sequence is that of Probable cytochrome P450 517A1 (cyp517A1) from Dictyostelium discoideum (Social amoeba).